Reading from the N-terminus, the 274-residue chain is Ubiquinone biosynthesis protein COQ4 homolog, mitochondrial (274 aa).

A mitochondrion-targeting transit peptide spans 1–20 (MLRQTAFRSMKLNRTPGRYF). Positions 13–40 (NRTPGRYFTTAENMDTGSSQSPPDTEQK) are disordered. Residues 22-36 (TAENMDTGSSQSPPD) show a composition bias toward polar residues. Zn(2+)-binding residues include His177, Asp178, His181, and Glu193.

Belongs to the COQ4 family. As to quaternary structure, component of a multi-subunit COQ enzyme complex. Zn(2+) serves as cofactor.

It localises to the mitochondrion inner membrane. It catalyses the reaction a 4-hydroxy-3-methoxy-5-(all-trans-polyprenyl)benzoate + H(+) = a 2-methoxy-6-(all-trans-polyprenyl)phenol + CO2. It participates in cofactor biosynthesis; ubiquinone biosynthesis. Its function is as follows. Lyase that catalyzes the C1-decarboxylation of 4-hydroxy-3-methoxy-5-(all-trans-polyprenyl)benzoic acid into 2-methoxy-6-(all-trans-polyprenyl)phenol during ubiquinone biosynthesis. The polypeptide is Ubiquinone biosynthesis protein COQ4 homolog, mitochondrial (Aedes aegypti (Yellowfever mosquito)).